The chain runs to 77 residues: MSDVADRVKKIVVEHLGVEEDKVTENASFIDDLGADSLDTVELVMAFEEEFGIEIPDDAAETIQTFGDAVKFISEAS.

Positions 2–77 constitute a Carrier domain; that stretch reads SDVADRVKKI…DAVKFISEAS (76 aa). Position 37 is an O-(pantetheine 4'-phosphoryl)serine (Ser-37).

Belongs to the acyl carrier protein (ACP) family. Post-translationally, 4'-phosphopantetheine is transferred from CoA to a specific serine of apo-ACP by AcpS. This modification is essential for activity because fatty acids are bound in thioester linkage to the sulfhydryl of the prosthetic group.

It is found in the cytoplasm. The protein operates within lipid metabolism; fatty acid biosynthesis. In terms of biological role, carrier of the growing fatty acid chain in fatty acid biosynthesis. The chain is Acyl carrier protein from Ruegeria pomeroyi (strain ATCC 700808 / DSM 15171 / DSS-3) (Silicibacter pomeroyi).